We begin with the raw amino-acid sequence, 362 residues long: Phosphoserine aminotransferase (362 aa).

L-glutamate is bound by residues serine 9 and arginine 42. Residues 76 to 77, tryptophan 102, threonine 153, aspartate 174, and glutamine 197 contribute to the pyridoxal 5'-phosphate site; that span reads GR. Lysine 198 is modified (N6-(pyridoxal phosphate)lysine). Residue 239 to 240 participates in pyridoxal 5'-phosphate binding; it reads NT.

It belongs to the class-V pyridoxal-phosphate-dependent aminotransferase family. SerC subfamily. As to quaternary structure, homodimer. Requires pyridoxal 5'-phosphate as cofactor.

The protein resides in the cytoplasm. The catalysed reaction is O-phospho-L-serine + 2-oxoglutarate = 3-phosphooxypyruvate + L-glutamate. The enzyme catalyses 4-(phosphooxy)-L-threonine + 2-oxoglutarate = (R)-3-hydroxy-2-oxo-4-phosphooxybutanoate + L-glutamate. The protein operates within amino-acid biosynthesis; L-serine biosynthesis; L-serine from 3-phospho-D-glycerate: step 2/3. It functions in the pathway cofactor biosynthesis; pyridoxine 5'-phosphate biosynthesis; pyridoxine 5'-phosphate from D-erythrose 4-phosphate: step 3/5. Catalyzes the reversible conversion of 3-phosphohydroxypyruvate to phosphoserine and of 3-hydroxy-2-oxo-4-phosphonooxybutanoate to phosphohydroxythreonine. In Salmonella newport (strain SL254), this protein is Phosphoserine aminotransferase.